The chain runs to 252 residues: Accessory gland protein Acp32CD (252 aa).

The signal sequence occupies residues 1 to 19; it reads MWRMRMRLLTGYLVLLALG. A disordered region spans residues 42-252; sequence PDGEGGTGVD…GAKEDDYEEM (211 aa). Over residues 44–69 the composition is skewed to gly residues; that stretch reads GEGGTGVDGGGGGAGGGAAGPGGGTG. Basic and acidic residues-rich tracts occupy residues 104 to 122, 142 to 153, 159 to 171, and 209 to 225; these read AIGK…DSKD, SDSKDAKDRQDK, QEGK…HHSS, and NGAR…KEVA.

Seminal fluid.

Its subcellular location is the secreted. Functionally, responsible for physiological and behavioral changes in mated female flies. In Drosophila melanogaster (Fruit fly), this protein is Accessory gland protein Acp32CD (Acp32CD).